Here is a 4334-residue protein sequence, read N- to C-terminus: Cytoplasmic dynein 2 heavy chain 1 (4334 aa).

The tract at residues 1–1704 (MSSDSRKTFV…KVAMAEATFD (1704 aa)) is stem. 150 to 157 (LGTAVRKG) is a binding site for ATP. Residues 1026–1097 (QEAKGLTAKL…AHLEEQKGNL (72 aa)) adopt a coiled-coil conformation. 4 AAA regions span residues 1705–1929 (YTWE…VLGI), 1996–2211 (KALA…KAFQ), 2299–2544 (GMDE…WING), and 2641–2882 (GYER…SSGS). ATP is bound by residues 1743–1750 (GPAGTGKT), 2034–2041 (GPSGSGKS), 2334–2341 (GPEGCGKG), and 2679–2686 (GNSGVGRR). Residues 2897–3185 (QIYNRKRTQV…ISVDKAESVL (289 aa)) form a stalk region. Coiled-coil stretches lie at residues 2930-2998 (LSAE…SEVQ) and 3120-3199 (ERVS…RGEK). AAA regions lie at residues 3260–3492 (LSSE…TVEK) and 3701–3917 (MSSF…VITL).

It belongs to the dynein heavy chain family. In terms of assembly, the cytoplasmic dynein complex 2 is probably composed by a DHC1B homodimer and a number of D1BLIC light intermediate chains. Interacts with FAP133, FLA10 and LC8.

The protein localises to the cytoplasm. It localises to the cytoskeleton. It is found in the flagellum basal body. Its subcellular location is the cell projection. The protein resides in the cilium. The protein localises to the flagellum membrane. May function as a motor for intraflagellar retrograde transport. Functions in flagellar biogenesis. The polypeptide is Cytoplasmic dynein 2 heavy chain 1 (DHC1B) (Chlamydomonas reinhardtii (Chlamydomonas smithii)).